A 313-amino-acid polypeptide reads, in one-letter code: MTSKPSNDRLHSYLDLQPEVAAALSQGRPVVALESTIISHGMPYPQNVEMARGVEQIVRDNGAVPATIAVLGGRLKVGLSADELELLATDKAVQKISTRDLPVTVALGGHGATTVASTMRIAALAGIRVFATGGTGGVHRGAGETMDISADLLELARTDVCVVSAGVKSILDIGLTLEVLETQGVPAITLGADEFPAFYSRRSGFSSPLTVQTPAEAARVLKVKWDLGLTGGVLLANPVPETAEIPAEEMETHITRALADMAALGLSGKDTTPYLLGRIVELTGGRSLETNIALVRHNAAAAAQVAAEYARLG.

Glu-34 acts as the Proton donor in catalysis. Substrate contacts are provided by Lys-95 and Val-115. Asp-147 contacts Mn(2+). Ser-149 to Asp-151 lines the substrate pocket. The active-site Nucleophile is the Lys-168.

It belongs to the pseudouridine-5'-phosphate glycosidase family. As to quaternary structure, homotrimer. Mn(2+) is required as a cofactor.

The catalysed reaction is D-ribose 5-phosphate + uracil = psi-UMP + H2O. Catalyzes the reversible cleavage of pseudouridine 5'-phosphate (PsiMP) to ribose 5-phosphate and uracil. Functions biologically in the cleavage direction, as part of a pseudouridine degradation pathway. The protein is Pseudouridine-5'-phosphate glycosidase of Deinococcus radiodurans (strain ATCC 13939 / DSM 20539 / JCM 16871 / CCUG 27074 / LMG 4051 / NBRC 15346 / NCIMB 9279 / VKM B-1422 / R1).